The primary structure comprises 236 residues: Small ribosomal subunit protein uS2c (236 aa).

It belongs to the universal ribosomal protein uS2 family.

The protein localises to the plastid. The protein resides in the chloroplast. The chain is Small ribosomal subunit protein uS2c (rps2) from Platanus occidentalis (Sycamore).